Reading from the N-terminus, the 103-residue chain is Thrombin inhibitor rhodniin (103 aa).

2 consecutive Kazal-like domains span residues Glu1–Pro50 and Asp51–Thr103. 6 disulfides stabilise this stretch: Cys6–Cys31, Cys8–Cys27, Cys16–Cys48, Cys57–Cys84, Cys60–Cys80, and Cys69–Cys101.

Its subcellular location is the secreted. In terms of biological role, thrombin-specific inhibitor. Appears to form 1:1 complexes with thrombin. Prevents blood clotting to allow the insect to feed on blood. The sequence is that of Thrombin inhibitor rhodniin from Rhodnius prolixus (Triatomid bug).